Consider the following 407-residue polypeptide: Substance-P receptor (407 aa).

Residues 1-31 (MDNVLPVDSDLSPNISTNTSEPNQFVQPAWQ) are Extracellular-facing. N-linked (GlcNAc...) asparagine glycans are attached at residues N14 and N18. Residues 32–54 (IVLWAAAYTVIVVTSVVGNVVVM) form a helical membrane-spanning segment. Residues 55 to 64 (WIILAHKRMR) are Cytoplasmic-facing. A helical membrane pass occupies residues 65 to 86 (TVTNYFLVNLAFAEASMAAFNT). Residues 87-106 (VVNFTYAVHNEWYYGLFYCK) lie on the Extracellular side of the membrane. Cysteines 105 and 180 form a disulfide. Residues 107–128 (FHNFFPIAAVFASIYSMTAVAF) form a helical membrane-spanning segment. Residues 129–148 (DRYMAIIHPLQPRLSATATK) are Cytoplasmic-facing. The chain crosses the membrane as a helical span at residues 149–169 (VVICVIWVLALLLAFPQGYYS). At 170-194 (TTETMPSRVVCMIEWPEHPNKIYEK) the chain is on the extracellular side. The chain crosses the membrane as a helical span at residues 195–219 (VYHICVTVLIYFLPLLVIGYAYTVV). H197 provides a ligand contact to CP-96345. Over 220 to 248 (GITLWASEIPGDSSDRYHEQVSAKRKVVK) the chain is Cytoplasmic. A helical membrane pass occupies residues 249–270 (MMIVVVCTFAICWLPFHIFFLL). Residues 271-283 (PYINPDLYLKKFI) lie on the Extracellular side of the membrane. Residues 284-308 (QQVYLAIMWLAMSSTMYNPIIYCCL) traverse the membrane as a helical segment. The Cytoplasmic segment spans residues 309-407 (NDRFRLGFKH…SFSFSSNVLS (99 aa)). A lipid anchor (S-palmitoyl cysteine) is attached at C322. Residues 364-407 (AHEEEPEDGPKATPSSLDLTSNCSSRSDSKTMTESFSFSSNVLS) are disordered. Polar residues predominate over residues 376–407 (TPSSLDLTSNCSSRSDSKTMTESFSFSSNVLS).

Belongs to the G-protein coupled receptor 1 family. In terms of assembly, interacts with ARRB1.

It localises to the cell membrane. Functionally, this is a receptor for the tachykinin neuropeptide substance P. It is probably associated with G proteins that activate a phosphatidylinositol-calcium second messenger system. The rank order of affinity of this receptor to tachykinins is: substance P &gt; substance K &gt; neuromedin-K. This is Substance-P receptor (TACR1) from Homo sapiens (Human).